A 395-amino-acid polypeptide reads, in one-letter code: FAD-dependent monooxygenase cctM (395 aa).

The signal sequence occupies residues 1–23; the sequence is MEPGTDVRRVLVIGAGAAGLLIA. The FAD site is built by E37, G52, and R112. N-linked (GlcNAc...) asparagine glycans are attached at residues N138 and N298. D306 provides a ligand contact to FAD.

The protein belongs to the paxM FAD-dependent monooxygenase family. FAD is required as a cofactor.

It functions in the pathway mycotoxin biosynthesis. In terms of biological role, FAD-dependent monooxygenase; part of the gene cluster that mediates the biosynthesis of the mycotoxin cyclochlorotine, a hepatotoxic and carcinogenic cyclic chlorinated pentapeptide. The function of cctM within the pathway, if any, remains undetermined. The NRPS cctN initially catalyzes the condensation of L-serine (Ser), Pro, L-2-aminobutyrate (2Abu), Ser, and beta-Phe in this order to produce isocyclotine. After the dichlorination of Pro2 catalyzed by cctP2 to produce isocyclochlorotine, the cctO-mediated transacylation of isocyclochlorotine can furnish cyclochlorotine. The subsequent hydroxylation of cyclochlorotine by cctR yields hydroxycyclochlorotine as the final product. CctP1 probably acts as a phenylalanine aminomutase and provides the uncommon building block beta-Phe. Furthermore, 2Abu can be synthesized from threonine by one of the threonine dehydratases and transaminases localized outside of the cluster. The functions of the remaining proteins encoded by the cluster, cctM and cctT, have not been identified yet. The sequence is that of FAD-dependent monooxygenase cctM from Talaromyces islandicus (Penicillium islandicum).